The sequence spans 796 residues: Cation/H(+) antiporter 6B (796 aa).

13 helical membrane-spanning segments follow: residues 54 to 74, 93 to 113, 131 to 151, 159 to 179, 194 to 213, 223 to 243, 259 to 279, 285 to 305, 310 to 330, 344 to 364, 382 to 402, 411 to 431, and 444 to 464; these read DFWE…FLLW, SMML…IPCL, IGAF…DVGI, SVVI…LLYS, YTVM…NMLL, FGQI…FLTV, LAFM…LWVI, GAPV…LSYL, FLFF…NGPP, EGIF…WSFL, FSFL…AALA, IILG…VLTA, and LLGV…HFLY.

It belongs to the monovalent cation:proton antiporter 2 (CPA2) transporter (TC 2.A.37) family. CHX (TC 2.A.37.4) subfamily. Preferentially expressed in pollen.

The protein resides in the membrane. In terms of biological role, may operate as a cation/H(+) antiporter. The chain is Cation/H(+) antiporter 6B (CHX6b) from Arabidopsis thaliana (Mouse-ear cress).